The primary structure comprises 237 residues: Demethylmenaquinone methyltransferase (237 aa).

S-adenosyl-L-methionine contacts are provided by residues Thr-58, Asp-79, and 106–107; that span reads NA.

This sequence belongs to the class I-like SAM-binding methyltransferase superfamily. MenG/UbiE family.

The catalysed reaction is a 2-demethylmenaquinol + S-adenosyl-L-methionine = a menaquinol + S-adenosyl-L-homocysteine + H(+). The protein operates within quinol/quinone metabolism; menaquinone biosynthesis; menaquinol from 1,4-dihydroxy-2-naphthoate: step 2/2. Functionally, methyltransferase required for the conversion of demethylmenaquinol (DMKH2) to menaquinol (MKH2). The chain is Demethylmenaquinone methyltransferase from Anoxybacillus flavithermus (strain DSM 21510 / WK1).